A 397-amino-acid polypeptide reads, in one-letter code: ATP phosphoribosyltransferase regulatory subunit (397 aa).

It belongs to the class-II aminoacyl-tRNA synthetase family. HisZ subfamily. In terms of assembly, heteromultimer composed of HisG and HisZ subunits.

The protein localises to the cytoplasm. Its pathway is amino-acid biosynthesis; L-histidine biosynthesis; L-histidine from 5-phospho-alpha-D-ribose 1-diphosphate: step 1/9. Its function is as follows. Required for the first step of histidine biosynthesis. May allow the feedback regulation of ATP phosphoribosyltransferase activity by histidine. This is ATP phosphoribosyltransferase regulatory subunit from Nitrosococcus oceani (strain ATCC 19707 / BCRC 17464 / JCM 30415 / NCIMB 11848 / C-107).